The following is a 362-amino-acid chain: Chorismate synthase (362 aa).

NADP(+) is bound at residue Arg47. Residues 124–126 (RSS), Gly286, 301–305 (KPTAT), and Arg327 each bind FMN.

Belongs to the chorismate synthase family. In terms of assembly, homotetramer. FMNH2 serves as cofactor.

It catalyses the reaction 5-O-(1-carboxyvinyl)-3-phosphoshikimate = chorismate + phosphate. It participates in metabolic intermediate biosynthesis; chorismate biosynthesis; chorismate from D-erythrose 4-phosphate and phosphoenolpyruvate: step 7/7. Catalyzes the anti-1,4-elimination of the C-3 phosphate and the C-6 proR hydrogen from 5-enolpyruvylshikimate-3-phosphate (EPSP) to yield chorismate, which is the branch point compound that serves as the starting substrate for the three terminal pathways of aromatic amino acid biosynthesis. This reaction introduces a second double bond into the aromatic ring system. This is Chorismate synthase from Synechocystis sp. (strain ATCC 27184 / PCC 6803 / Kazusa).